A 499-amino-acid chain; its full sequence is Maturase K (499 aa).

It belongs to the intron maturase 2 family. MatK subfamily.

The protein localises to the plastid. It localises to the chloroplast. Usually encoded in the trnK tRNA gene intron. Probably assists in splicing its own and other chloroplast group II introns. The protein is Maturase K of Macrozamia communis (Burrawang palm).